We begin with the raw amino-acid sequence, 454 residues long: Bifunctional protein GlmU (454 aa).

Positions 1–225 (MNIVILAAGM…IWETLGVNSK (225 aa)) are pyrophosphorylase. UDP-N-acetyl-alpha-D-glucosamine-binding positions include 6 to 9 (LAAG), Lys20, Gln71, 76 to 77 (GT), 98 to 100 (YGD), Gly135, Glu150, Asn165, and Asn223. Asp100 contributes to the Mg(2+) binding site. Asn223 is a Mg(2+) binding site. Residues 226–246 (LQLAEVERIHQGNQARRLLEA) are linker. The tract at residues 247-454 (GVTLLDPARI…WQRPVKQPKK (208 aa)) is N-acetyltransferase. Positions 329 and 347 each coordinate UDP-N-acetyl-alpha-D-glucosamine. The Proton acceptor role is filled by His359. Residues Tyr362 and Asn373 each contribute to the UDP-N-acetyl-alpha-D-glucosamine site. Acetyl-CoA contacts are provided by residues Ala376, 382–383 (NY), Ser401, Ala419, and Arg436.

The protein in the N-terminal section; belongs to the N-acetylglucosamine-1-phosphate uridyltransferase family. In the C-terminal section; belongs to the transferase hexapeptide repeat family. As to quaternary structure, homotrimer. Requires Mg(2+) as cofactor.

Its subcellular location is the cytoplasm. The enzyme catalyses alpha-D-glucosamine 1-phosphate + acetyl-CoA = N-acetyl-alpha-D-glucosamine 1-phosphate + CoA + H(+). It carries out the reaction N-acetyl-alpha-D-glucosamine 1-phosphate + UTP + H(+) = UDP-N-acetyl-alpha-D-glucosamine + diphosphate. It participates in nucleotide-sugar biosynthesis; UDP-N-acetyl-alpha-D-glucosamine biosynthesis; N-acetyl-alpha-D-glucosamine 1-phosphate from alpha-D-glucosamine 6-phosphate (route II): step 2/2. The protein operates within nucleotide-sugar biosynthesis; UDP-N-acetyl-alpha-D-glucosamine biosynthesis; UDP-N-acetyl-alpha-D-glucosamine from N-acetyl-alpha-D-glucosamine 1-phosphate: step 1/1. Its pathway is bacterial outer membrane biogenesis; LPS lipid A biosynthesis. Functionally, catalyzes the last two sequential reactions in the de novo biosynthetic pathway for UDP-N-acetylglucosamine (UDP-GlcNAc). The C-terminal domain catalyzes the transfer of acetyl group from acetyl coenzyme A to glucosamine-1-phosphate (GlcN-1-P) to produce N-acetylglucosamine-1-phosphate (GlcNAc-1-P), which is converted into UDP-GlcNAc by the transfer of uridine 5-monophosphate (from uridine 5-triphosphate), a reaction catalyzed by the N-terminal domain. This is Bifunctional protein GlmU from Cupriavidus necator (strain ATCC 17699 / DSM 428 / KCTC 22496 / NCIMB 10442 / H16 / Stanier 337) (Ralstonia eutropha).